The primary structure comprises 366 residues: Chorismate synthase (366 aa).

2 residues coordinate NADP(+): Arg48 and Arg54. Residues 125–127, 238–239, Gly278, 293–297, and Arg319 contribute to the FMN site; these read RSS, NA, and KPTSS.

The protein belongs to the chorismate synthase family. Homotetramer. FMNH2 is required as a cofactor.

It carries out the reaction 5-O-(1-carboxyvinyl)-3-phosphoshikimate = chorismate + phosphate. The protein operates within metabolic intermediate biosynthesis; chorismate biosynthesis; chorismate from D-erythrose 4-phosphate and phosphoenolpyruvate: step 7/7. Functionally, catalyzes the anti-1,4-elimination of the C-3 phosphate and the C-6 proR hydrogen from 5-enolpyruvylshikimate-3-phosphate (EPSP) to yield chorismate, which is the branch point compound that serves as the starting substrate for the three terminal pathways of aromatic amino acid biosynthesis. This reaction introduces a second double bond into the aromatic ring system. The protein is Chorismate synthase of Pseudoalteromonas atlantica (strain T6c / ATCC BAA-1087).